We begin with the raw amino-acid sequence, 215 residues long: Chaperone protein TorD (215 aa).

This sequence belongs to the TorD/DmsD family. TorD subfamily.

Its subcellular location is the cytoplasm. Involved in the biogenesis of TorA. Acts on TorA before the insertion of the molybdenum cofactor and, as a result, probably favors a conformation of the apoenzyme that is competent for acquiring the cofactor. In Vibrio atlanticus (strain LGP32) (Vibrio splendidus (strain Mel32)), this protein is Chaperone protein TorD.